The sequence spans 524 residues: ORC1-type DNA replication protein 4 (524 aa).

Polar residues predominate over residues 1–23 (MTDKSNNPAPASDPSTTETSNDA). Positions 1-67 (MTDKSNNPAP…DDPSDEASRG (67 aa)) are disordered. Residues 128–132 (TGKTA), Tyr325, and Arg337 contribute to the ATP site.

The protein belongs to the CDC6/cdc18 family.

In terms of biological role, involved in regulation of DNA replication. In Haloarcula marismortui (strain ATCC 43049 / DSM 3752 / JCM 8966 / VKM B-1809) (Halobacterium marismortui), this protein is ORC1-type DNA replication protein 4 (cdc6d).